Reading from the N-terminus, the 207-residue chain is Small ribosomal subunit protein uS3 (207 aa).

Positions 17–86 (IDEYLEKELR…NPQIEVEEIK (70 aa)) constitute a KH type-2 domain.

This sequence belongs to the universal ribosomal protein uS3 family. Part of the 30S ribosomal subunit.

Its function is as follows. Binds the lower part of the 30S subunit head. The sequence is that of Small ribosomal subunit protein uS3 from Thermococcus sibiricus (strain DSM 12597 / MM 739).